A 125-amino-acid polypeptide reads, in one-letter code: MAFPTTSAQQAETNRKILEDIQTKKQLLAGGIINLGLSNTNQMPSPQLLGQPTVAPEFLPQGVGLPTNATPPRSAFNPTSSTTLGFFIPQDSYFGNSFIPVLPRLEPLPTTTAPATTTASHIAPK.

Residues 43–77 form a disordered region; the sequence is MPSPQLLGQPTVAPEFLPQGVGLPTNATPPRSAFN. Over residues 67–77 the composition is skewed to polar residues; sequence TNATPPRSAFN.

The protein belongs to the SOSS-C family.

The sequence is that of SOSS complex subunit C homolog from Drosophila persimilis (Fruit fly).